The sequence spans 262 residues: 3-methyl-2-oxobutanoate hydroxymethyltransferase (262 aa).

Positions 43 and 82 each coordinate Mg(2+). Residues 43-44 (DS), Asp82, and Lys111 each bind 3-methyl-2-oxobutanoate. Position 113 (Glu113) interacts with Mg(2+). Glu180 (proton acceptor) is an active-site residue.

It belongs to the PanB family. In terms of assembly, homodecamer; pentamer of dimers. Requires Mg(2+) as cofactor.

The protein localises to the cytoplasm. It carries out the reaction 3-methyl-2-oxobutanoate + (6R)-5,10-methylene-5,6,7,8-tetrahydrofolate + H2O = 2-dehydropantoate + (6S)-5,6,7,8-tetrahydrofolate. It participates in cofactor biosynthesis; (R)-pantothenate biosynthesis; (R)-pantoate from 3-methyl-2-oxobutanoate: step 1/2. Its function is as follows. Catalyzes the reversible reaction in which hydroxymethyl group from 5,10-methylenetetrahydrofolate is transferred onto alpha-ketoisovalerate to form ketopantoate. This Wolinella succinogenes (strain ATCC 29543 / DSM 1740 / CCUG 13145 / JCM 31913 / LMG 7466 / NCTC 11488 / FDC 602W) (Vibrio succinogenes) protein is 3-methyl-2-oxobutanoate hydroxymethyltransferase.